We begin with the raw amino-acid sequence, 379 residues long: Caffeyl-CoA reductase-Etf complex subunit CarC (379 aa).

Residues 122-131 and 155-157 each bind FAD; these read FALTEPGAGS and FIT. Residue Ser131 participates in substrate binding. Substrate is bound at residue 239–242; sequence DVGR. FAD contacts are provided by residues Arg267, Gln278, and 335–339; that span reads QIHGG. Glu362 acts as the Proton acceptor in catalysis. Gly363 contributes to the substrate binding site. Residue 364–366 participates in FAD binding; that stretch reads TSQ.

This sequence belongs to the acyl-CoA dehydrogenase family. As to quaternary structure, part of the homotrimeric caffeyl-CoA reductase-Etf complex composed of (R)-2-hydroxyisocaproyl-CoA dehydratase CarC, and the electron transfer flavoprotein (ETF) alpha (CarE) and beta (CarD) subunits. The cofactor is FAD.

The protein localises to the cytoplasm. The enzyme catalyses hydrocaffeoyl-CoA + 2 reduced [2Fe-2S]-[ferredoxin] + 2 NAD(+) = (E)-caffeoyl-CoA + 2 oxidized [2Fe-2S]-[ferredoxin] + 2 NADH. In terms of biological role, the Caffeyl-CoA reductase-Etf complex catalyzes the reduction of caffeyl-CoA to yield hydrocaffeyl-CoA. It couples the endergonic ferredoxin reduction with NADH as reductant to the exergonic reduction of caffeoyl-CoA with the same reductant. It uses the mechanism of electron bifurcation to overcome the steep energy barrier in ferredoxin reduction. Also reduces 4-coumaroyl-CoA and feruloyl-CoA. This is Caffeyl-CoA reductase-Etf complex subunit CarC from Acetobacterium woodii (strain ATCC 29683 / DSM 1030 / JCM 2381 / KCTC 1655 / WB1).